Reading from the N-terminus, the 401-residue chain is Collagen and calcium-binding EGF domain-containing protein 1 (401 aa).

The first 22 residues, 1–22 (MIYPGRGASLSVAVALVLFSSG), serve as a signal peptide directing secretion. An EGF-like; calcium-binding domain is found at 126–167 (DIDECANNNETVCSQMCVNTPGSYRCDCHSGFYLEDDGKTCT). Cystine bridges form between cysteine 130–cysteine 142, cysteine 138–cysteine 151, and cysteine 153–cysteine 166. Asparagine 134 carries N-linked (GlcNAc...) asparagine glycosylation. 2 disordered regions span residues 229–321 (TTNS…PGSF) and 344–401 (SRPL…DWPV). Collagen-like domains follow at residues 234–276 (LPGP…PIGP) and 286–319 (GRRG…GPPG). The segment covering 235–244 (PGPPGPPGPA) has biased composition (pro residues). Low complexity predominate over residues 246–258 (TPGAKGSSGSPGQ).

The protein belongs to the CCBE1 family. In terms of tissue distribution, not expressed in blood or lymphatic endothelial cells, correlating spatially and temporally with the migration routes of endothelial cells that bud from the PCV, migrate in association with somite boundaries and seed the horizontal myoseptum region from where lymphatic precursors later migrate.

It is found in the secreted. Its function is as follows. Required for lymphangioblast budding and angiogenic sprouting from venous endothelium during embryogenesis. Required for the formation of facial lymphatic structures. Necessary for lymphangiogenesis, but is probably not part of either the vegfc-vegfr3 signaling or sox18-prox1 transcriptional pathways. In Danio rerio (Zebrafish), this protein is Collagen and calcium-binding EGF domain-containing protein 1 (ccbe1).